A 388-amino-acid polypeptide reads, in one-letter code: Chorismate synthase (388 aa).

Arg39 and Arg45 together coordinate NADP(+). FMN is bound by residues 130–132 (RSS), 251–252 (NA), Gly296, 311–315 (KPIPT), and Arg337.

This sequence belongs to the chorismate synthase family. In terms of assembly, homotetramer. The cofactor is FMNH2.

The catalysed reaction is 5-O-(1-carboxyvinyl)-3-phosphoshikimate = chorismate + phosphate. It participates in metabolic intermediate biosynthesis; chorismate biosynthesis; chorismate from D-erythrose 4-phosphate and phosphoenolpyruvate: step 7/7. In terms of biological role, catalyzes the anti-1,4-elimination of the C-3 phosphate and the C-6 proR hydrogen from 5-enolpyruvylshikimate-3-phosphate (EPSP) to yield chorismate, which is the branch point compound that serves as the starting substrate for the three terminal pathways of aromatic amino acid biosynthesis. This reaction introduces a second double bond into the aromatic ring system. The protein is Chorismate synthase of Streptococcus pyogenes serotype M1.